We begin with the raw amino-acid sequence, 120 residues long: Large ribosomal subunit protein uL29A (120 aa).

2 positions are modified to phosphoserine: serine 13 and serine 50.

This sequence belongs to the universal ribosomal protein uL29 family. Component of the large ribosomal subunit (LSU). Mature yeast ribosomes consist of a small (40S) and a large (60S) subunit. The 40S small subunit contains 1 molecule of ribosomal RNA (18S rRNA) and 33 different proteins (encoded by 57 genes). The large 60S subunit contains 3 rRNA molecules (25S, 5.8S and 5S rRNA) and 46 different proteins (encoded by 81 genes). uL29 is associated with the polypeptide exit tunnel.

It is found in the cytoplasm. Component of the ribosome, a large ribonucleoprotein complex responsible for the synthesis of proteins in the cell. The small ribosomal subunit (SSU) binds messenger RNAs (mRNAs) and translates the encoded message by selecting cognate aminoacyl-transfer RNA (tRNA) molecules. The large subunit (LSU) contains the ribosomal catalytic site termed the peptidyl transferase center (PTC), which catalyzes the formation of peptide bonds, thereby polymerizing the amino acids delivered by tRNAs into a polypeptide chain. The nascent polypeptides leave the ribosome through a tunnel in the LSU and interact with protein factors that function in enzymatic processing, targeting, and the membrane insertion of nascent chains at the exit of the ribosomal tunnel. The protein is Large ribosomal subunit protein uL29A of Saccharomyces cerevisiae (strain ATCC 204508 / S288c) (Baker's yeast).